Consider the following 143-residue polypeptide: Zinc-containing ferredoxin (143 aa).

The interval 13–60 (PIDEHFLENDKDYPVTGQHNGHDVRAEGMQRLDADGKPYPTKLGIHGT) is N-terminal extension. 3 residues coordinate Zn(2+): histidine 31, histidine 34, and histidine 58. 4Fe-4S ferredoxin-type domains lie at 60–89 (THVA…WNLN) and 115–143 (KCDP…KITP). Residues cysteine 69 and cysteine 75 each contribute to the [3Fe-4S] cluster site. A [4Fe-4S] cluster-binding site is contributed by cysteine 79. A Zn(2+)-binding site is contributed by aspartate 117. Positions 124, 127, and 130 each coordinate [4Fe-4S] cluster. Cysteine 134 is a [3Fe-4S] cluster binding site.

Requires [3Fe-4S] cluster as cofactor. It depends on [4Fe-4S] cluster as a cofactor. Zn(2+) is required as a cofactor.

Ferredoxins are iron-sulfur proteins that transfer electrons in a wide variety of metabolic reactions. This chain is Zinc-containing ferredoxin (zfx), found in Thermoplasma acidophilum (strain ATCC 25905 / DSM 1728 / JCM 9062 / NBRC 15155 / AMRC-C165).